A 352-amino-acid chain; its full sequence is Photosystem II D2 protein (352 aa).

Position 2 is an N-acetylthreonine (Thr2). A Phosphothreonine modification is found at Thr2. A helical membrane pass occupies residues 40-60 (CAYMALGGWLTGTTFVTSWYT). His117 serves as a coordination point for chlorophyll a. A helical membrane pass occupies residues 124–140 (GFMLRQFEIAQSLKLRP). Gln129 and Asn142 together coordinate pheophytin a. A helical transmembrane segment spans residues 152–165 (VFVSVFLIYPLGQA). Position 197 (His197) interacts with chlorophyll a. The helical transmembrane segment at 207 to 227 (AALLCAIHGATVENTLFEDGD) threads the bilayer. A plastoquinone is bound by residues His214 and Phe261. Residue His214 participates in Fe cation binding. Position 268 (His268) interacts with Fe cation. Residues 278–294 (GLWMSAIGVVGLALNLR) traverse the membrane as a helical segment.

It belongs to the reaction center PufL/M/PsbA/D family. As to quaternary structure, PSII is composed of 1 copy each of membrane proteins PsbA, PsbB, PsbC, PsbD, PsbE, PsbF, PsbH, PsbI, PsbJ, PsbK, PsbL, PsbM, PsbT, PsbX, PsbY, PsbZ, Psb30/Ycf12, at least 3 peripheral proteins of the oxygen-evolving complex and a large number of cofactors. It forms dimeric complexes. It depends on The D1/D2 heterodimer binds P680, chlorophylls that are the primary electron donor of PSII, and subsequent electron acceptors. It shares a non-heme iron and each subunit binds pheophytin, quinone, additional chlorophylls, carotenoids and lipids. There is also a Cl(-1) ion associated with D1 and D2, which is required for oxygen evolution. The PSII complex binds additional chlorophylls, carotenoids and specific lipids. as a cofactor.

The protein resides in the plastid. The protein localises to the chloroplast thylakoid membrane. The catalysed reaction is 2 a plastoquinone + 4 hnu + 2 H2O = 2 a plastoquinol + O2. Functionally, photosystem II (PSII) is a light-driven water:plastoquinone oxidoreductase that uses light energy to abstract electrons from H(2)O, generating O(2) and a proton gradient subsequently used for ATP formation. It consists of a core antenna complex that captures photons, and an electron transfer chain that converts photonic excitation into a charge separation. The D1/D2 (PsbA/PsbD) reaction center heterodimer binds P680, the primary electron donor of PSII as well as several subsequent electron acceptors. D2 is needed for assembly of a stable PSII complex. The polypeptide is Photosystem II D2 protein (Stigeoclonium helveticum (Green alga)).